Consider the following 512-residue polypeptide: Bestrophin-2 (512 aa).

Topologically, residues 1 to 31 (MTVTYTARVAKARFGGFSKLLLLWRGSIYKL) are cytoplasmic. Residue Ala-10 participates in Ca(2+) binding. The chain crosses the membrane as a helical span at residues 32–51 (LWRELLCFLGLFMALSAAYR). The Extracellular portion of the chain corresponds to 52 to 60 (FVLTEEQKR). Residues 61-82 (YFEKLVLYCDRYASLIPVSFVL) traverse the membrane as a helical segment. Over 83-238 (GFYVTLVVHR…WISVPLVYTQ (156 aa)) the chain is Cytoplasmic. A helical transmembrane segment spans residues 239 to 255 (VVTIAVYSYFLACLIGR). The Extracellular segment spans residues 256 to 274 (QFLDPAQGYKDHDLDLCVP). The chain crosses the membrane as a helical span at residues 275 to 288 (IFTLLQFFFYAGWL). Residues 289-512 (KVAEQLINPF…PIGEEEESLA (224 aa)) lie on the Cytoplasmic side of the membrane. Gln-293, Asn-296, Asp-301, and Asp-304 together coordinate Ca(2+). Positions 453–512 (VDLGQPEPESEPITGPESPALVPAPRAPSEPLTVVPLSGTRGPAPPWLPSPIGEEEESLA) are disordered.

Belongs to the anion channel-forming bestrophin (TC 1.A.46) family. Calcium-sensitive chloride channel subfamily. Pentamer. Interacts with GLUL; this interaction tethers a fraction of GLUL to the membrane, causing a decrease of cytosolic glutamine synthase (GS) activity and inhibits the chloride channel activity of BEST2 by affecting the gating at the aperture in the absence of intracellular glutamate.

The protein resides in the cell membrane. Its subcellular location is the basolateral cell membrane. It catalyses the reaction chloride(in) = chloride(out). It carries out the reaction iodide(out) = iodide(in). The catalysed reaction is hydrogencarbonate(in) = hydrogencarbonate(out). The enzyme catalyses L-glutamate(out) = L-glutamate(in). It catalyses the reaction L-glutamine(out) = L-glutamine(in). With respect to regulation, chloride channel activity is allosterically inhibited by GLUL/glutamine synthase (GS) which affects the gating at the aperture in the absence of intracellular glutamate. Inhibitory effect of GLUL is relieved upon increasing of intracellular level of L-glutamate. In terms of biological role, ligand-gated anion channel that allows the movement of anions across cell membranes when activated by calcium (Ca2+). Transports a large specter of anions, namely mediates the movement of chloride, L-glutamate and iodide. Calcium-binding triggers the dilation of the aperture, but calcium-dependent gating is only effective when the size of the passing anion is bigger than the closed aperture. Mediates the calcium-activated hydrogencarbonate movement and participates in colonic hydrogencarbonate secretion concomitant with mucin secretion. In non-pigmented epithelium (NPE), mediates the efflux of intracellular L-glutamate; binding of intracellular L-glutamate activates and open both the neck and the aperture of the channel, leading to L-glutamate exit promoting chloride influx movement from the extracellular side in trans. Also exhibits a directional permeability for intracellular glutamine, in a similar manner as for L-glutamate. The protein is Bestrophin-2 of Bos taurus (Bovine).